Reading from the N-terminus, the 291-residue chain is 3-hydroxy-5-phosphonooxypentane-2,4-dione thiolase (291 aa).

Residue lysine 203 is the Schiff-base intermediate with substrate of the active site.

This sequence belongs to the DeoC/FbaB aldolase family. Homodecamer.

It localises to the cytoplasm. It catalyses the reaction dihydroxyacetone phosphate + acetyl-CoA = 3-hydroxy-2,4-dioxopentyl phosphate + CoA. In terms of biological role, involved in the degradation of phospho-AI-2, thereby terminating induction of the lsr operon and closing the AI-2 signaling cycle. Catalyzes the transfer of an acetyl moiety from 3-hydroxy-5-phosphonooxypentane-2,4-dione to CoA to form glycerone phosphate and acetyl-CoA. In Yersinia enterocolitica serotype O:8 / biotype 1B (strain NCTC 13174 / 8081), this protein is 3-hydroxy-5-phosphonooxypentane-2,4-dione thiolase.